We begin with the raw amino-acid sequence, 191 residues long: uncharacterized protein (191 aa).

This is an uncharacterized protein from Schizosaccharomyces pombe (strain 972 / ATCC 24843) (Fission yeast).